The following is a 219-amino-acid chain: Carboxypeptidase Y inhibitor (219 aa).

An N-acetylmethionine modification is found at M1.

Belongs to the phosphatidylethanolamine-binding protein family. In terms of assembly, monomer.

It localises to the cytoplasm. Specific and potent inhibitor of carboxypeptidase Y. The sequence is that of Carboxypeptidase Y inhibitor (TFS1) from Saccharomyces cerevisiae (strain ATCC 204508 / S288c) (Baker's yeast).